The following is a 914-amino-acid chain: TRPM8 channel-associated factor 3 (914 aa).

One can recognise a Peptidase M60 domain in the interval 533-832; it reads NSWVSTGLYL…TYLQLQEGFG (300 aa).

The protein belongs to the TCAF family. In terms of tissue distribution, prostate-specific. Present in both dorso-lateral and anterior prostate.

Its function is as follows. May play a role in the regulation of the cation channel TRPM8 activity. The polypeptide is TRPM8 channel-associated factor 3 (Mus musculus (Mouse)).